The following is a 475-amino-acid chain: GlcNAc-binding protein A (475 aa).

A signal peptide spans 1–27 (MPKLTQLSLVTLALTAGSTLVSQTASA). The Chitin-binding type-4 domain occupies 28 to 195 (HGYVVSPESR…SFYNAIDVNF (168 aa)). The Chitin-binding type-3 domain maps to 426–468 (AGTKVLQPKTGKVYQCKPWPYNGYCVQWSPTATGFEPGIGNSW).

The protein belongs to the GbpA family.

The protein localises to the secreted. Its function is as follows. Probably interacts with GlcNAc residues. May promote attachment to both epithelial cell surfaces and chitin. This Shewanella oneidensis (strain ATCC 700550 / JCM 31522 / CIP 106686 / LMG 19005 / NCIMB 14063 / MR-1) protein is GlcNAc-binding protein A.